The primary structure comprises 277 residues: Protein HEAT-INDUCED TAS1 TARGET 1 (277 aa).

The protein belongs to the heat induced plant HTT protein family. As to quaternary structure, interacts with the heat shock proteins HSP70-14 and At2g33735/HSP40, and with NFYC2 in both cytoplasm and nucleus. As to expression, expressed ubiquitously, including in seedlings, leaves, stems, inflorescences and siliques.

It is found in the cytoplasm. The protein resides in the nucleus. Its function is as follows. Mediates both basal and acquired thermotolerance via HSFA1s-directed pathways (e.g. HSFA1A, HSFA1B, and HSFA1D). Triggers the expression of HSFA1A and HSFA1B. The protein is Protein HEAT-INDUCED TAS1 TARGET 1 of Arabidopsis thaliana (Mouse-ear cress).